Here is a 313-residue protein sequence, read N- to C-terminus: Ribosomal RNA small subunit methyltransferase H (313 aa).

S-adenosyl-L-methionine-binding positions include 35–37 (GGH), aspartate 55, phenylalanine 79, aspartate 100, and glutamine 107.

This sequence belongs to the methyltransferase superfamily. RsmH family.

The protein resides in the cytoplasm. The enzyme catalyses cytidine(1402) in 16S rRNA + S-adenosyl-L-methionine = N(4)-methylcytidine(1402) in 16S rRNA + S-adenosyl-L-homocysteine + H(+). In terms of biological role, specifically methylates the N4 position of cytidine in position 1402 (C1402) of 16S rRNA. The chain is Ribosomal RNA small subunit methyltransferase H from Burkholderia orbicola (strain MC0-3).